Consider the following 243-residue polypeptide: MNCAASVSVIMPAAGSGQRFGSQSNKLFAHLDGKPLWQHAIDRFQHRGDVRQIVLAVSEEDESRFREQIAAISSAVPIHLVRGGATRSESVGAALEQVKRFAAESAAANASTQTLVAIHDAARPLVRQSDLDRVIAKAAETGAAILAAPVSGTLKRATGDGSETVDRRNTYVALTPQVFAIDVICQAYARDRGRMATDDAQLVERTSHPVQLVTGSADNLKITFPEDLRIAEAILNECRSEFV.

This sequence belongs to the IspD/TarI cytidylyltransferase family. IspD subfamily.

It carries out the reaction 2-C-methyl-D-erythritol 4-phosphate + CTP + H(+) = 4-CDP-2-C-methyl-D-erythritol + diphosphate. The protein operates within isoprenoid biosynthesis; isopentenyl diphosphate biosynthesis via DXP pathway; isopentenyl diphosphate from 1-deoxy-D-xylulose 5-phosphate: step 2/6. Functionally, catalyzes the formation of 4-diphosphocytidyl-2-C-methyl-D-erythritol from CTP and 2-C-methyl-D-erythritol 4-phosphate (MEP). In Rhodopirellula baltica (strain DSM 10527 / NCIMB 13988 / SH1), this protein is 2-C-methyl-D-erythritol 4-phosphate cytidylyltransferase.